A 651-amino-acid polypeptide reads, in one-letter code: Bromodomain-containing protein 7 (651 aa).

Residue lysine 21 forms a Glycyl lysine isopeptide (Lys-Gly) (interchain with G-Cter in SUMO2) linkage. Residues 35–45 show a composition bias toward polar residues; sequence TELSTGSSGHD. Residues 35 to 132 form a disordered region; it reads TELSTGSSGH…SSLAKQEEVE (98 aa). Residues 47–57 show a composition bias toward basic and acidic residues; the sequence is SLFEDKNDHDK. Lysine 52 participates in a covalent cross-link: Glycyl lysine isopeptide (Lys-Gly) (interchain with G-Cter in SUMO2). A compositionally biased stretch (basic residues) spans 58 to 69; it reads HKDRKRKKRKKG. Positions 65–96 match the Nuclear localization signal motif; sequence KRKKGEKQIPGEEKGRKRRRVKEDKKKRDRDR. The span at 70–106 shows a compositional bias: basic and acidic residues; sequence EKQIPGEEKGRKRRRVKEDKKKRDRDRVENEAEKDLQ. Residues lysine 127, lysine 186, lysine 197, lysine 201, lysine 212, and lysine 241 each participate in a glycyl lysine isopeptide (Lys-Gly) (interchain with G-Cter in SUMO2) cross-link. The region spanning 131–235 is the Bromo domain; sequence VEQTPLQEAL…HSGMKILSQE (105 aa). Positions 253-312 are disordered; it reads TRKQKDGTDTSQSGEDGGCWQREREDSGDAEAHASKSPSKENKKKDNDMLEDKFKSNNLE. Positions 273-312 are enriched in basic and acidic residues; that stretch reads QREREDSGDAEAHASKSPSKENKKKDNDMLEDKFKSNNLE. A phosphoserine mark is found at serine 279 and serine 289. Residues lysine 305 and lysine 307 each participate in a glycyl lysine isopeptide (Lys-Gly) (interchain with G-Cter in SUMO2) cross-link. At lysine 328 the chain carries N6-acetyllysine. A Glycyl lysine isopeptide (Lys-Gly) (interchain with G-Cter in SUMO2) cross-link involves residue lysine 344. A Phosphoserine modification is found at serine 380. Residue lysine 389 forms a Glycyl lysine isopeptide (Lys-Gly) (interchain with G-Cter in SUMO2) linkage. Serine 482 carries the post-translational modification Phosphoserine. Phosphothreonine is present on threonine 514. A coiled-coil region spans residues 536–567; it reads SEEAEIFQKKLDETTRLLRELQEAQNERLSTR. At serine 621 the chain carries Phosphoserine.

Interacts with TRIM24, PTPN13 and DVL1. Identified in a complex with SMARCA4/BRG1, SMARCC1/BAF155, SMARCE1/BAF57, DPF2/BAF45D and ARID2, subunits of the SWI/SNF-B (PBAF) chromatin remodeling complex. Interacts with IRF2 and HNRPUL1. Interacts (via N-terminus) with TP53. Interacts (via C-terminus) with EP300. Interacts with BRCA1. Interacts (via bromo domain) with histone H3 (via N-terminus) acetylated at 'Lys-14' (H3K14ac). Has low affinity for histone H3 acetylated at 'Lys-9' (H3K9ac). Has the highest affinity for histone H3 that is acetylated both at 'Lys-9' (H3K9ac) and at 'Lys-14' (H3K14ac). Has very low affinity for non-acetylated histone H3. Interacts (via bromo domain) with histone H4 (via N-terminus) acetylated at 'Lys-8' (H3K8ac) (in vitro).

The protein localises to the nucleus. The protein resides in the chromosome. In terms of biological role, acts both as coactivator and as corepressor. May play a role in chromatin remodeling. Activator of the Wnt signaling pathway in a DVL1-dependent manner by negatively regulating the GSK3B phosphotransferase activity. Induces dephosphorylation of GSK3B at 'Tyr-216'. Down-regulates TRIM24-mediated activation of transcriptional activation by AR. Transcriptional corepressor that down-regulates the expression of target genes. Binds to target promoters, leading to increased histone H3 acetylation at 'Lys-9' (H3K9ac). Binds to the ESR1 promoter. Recruits BRCA1 and POU2F1 to the ESR1 promoter. Coactivator for TP53-mediated activation of transcription of a set of target genes. Required for TP53-mediated cell-cycle arrest in response to oncogene activation. Promotes acetylation of TP53 at 'Lys-382', and thereby promotes efficient recruitment of TP53 to target promoters. Inhibits cell cycle progression from G1 to S phase. The sequence is that of Bromodomain-containing protein 7 (BRD7) from Pongo abelii (Sumatran orangutan).